The chain runs to 159 residues: Ribonuclease P protein component 2 (159 aa).

It belongs to the eukaryotic/archaeal RNase P protein component 2 family. In terms of assembly, consists of a catalytic RNA component and at least 4-5 protein subunits.

Its subcellular location is the cytoplasm. It catalyses the reaction Endonucleolytic cleavage of RNA, removing 5'-extranucleotides from tRNA precursor.. In terms of biological role, part of ribonuclease P, a protein complex that generates mature tRNA molecules by cleaving their 5'-ends. In Halorubrum lacusprofundi (strain ATCC 49239 / DSM 5036 / JCM 8891 / ACAM 34), this protein is Ribonuclease P protein component 2.